The sequence spans 203 residues: dITP/XTP pyrophosphatase (203 aa).

8 to 13 (SNNAGK) contacts substrate. Asp-40 and Asp-69 together coordinate Mg(2+). The Proton acceptor role is filled by Asp-69. Substrate is bound by residues Ser-70, 152-155 (FGYD), Lys-175, and 180-181 (HR).

Belongs to the HAM1 NTPase family. As to quaternary structure, homodimer. Requires Mg(2+) as cofactor.

The catalysed reaction is XTP + H2O = XMP + diphosphate + H(+). It carries out the reaction dITP + H2O = dIMP + diphosphate + H(+). The enzyme catalyses ITP + H2O = IMP + diphosphate + H(+). In terms of biological role, pyrophosphatase that catalyzes the hydrolysis of nucleoside triphosphates to their monophosphate derivatives, with a high preference for the non-canonical purine nucleotides XTP (xanthosine triphosphate), dITP (deoxyinosine triphosphate) and ITP. Seems to function as a house-cleaning enzyme that removes non-canonical purine nucleotides from the nucleotide pool, thus preventing their incorporation into DNA/RNA and avoiding chromosomal lesions. The sequence is that of dITP/XTP pyrophosphatase from Nitrosomonas europaea (strain ATCC 19718 / CIP 103999 / KCTC 2705 / NBRC 14298).